Reading from the N-terminus, the 267-residue chain is Sulfate transporter CysZ (267 aa).

4 consecutive transmembrane segments (helical) span residues 29 to 49 (FVIM…WLFI), 73 to 93 (ILLI…FTTL), 149 to 169 (IILF…PIIV), and 212 to 232 (GLVM…PVAV).

This sequence belongs to the CysZ family.

It localises to the cell inner membrane. In terms of biological role, high affinity, high specificity proton-dependent sulfate transporter, which mediates sulfate uptake. Provides the sulfur source for the cysteine synthesis pathway. This is Sulfate transporter CysZ from Pasteurella multocida (strain Pm70).